We begin with the raw amino-acid sequence, 840 residues long: Protein translocase subunit SecA (840 aa).

ATP is bound by residues Gln-85, 103–107 (GEGKT), and Asp-492. The tract at residues 787–821 (QRERVAKETGASHGGDSQEIKKKPVKKEPKVGRND) is disordered. Positions 802 to 819 (DSQEIKKKPVKKEPKVGR) are enriched in basic and acidic residues. Cys-823, Cys-825, Cys-834, and Cys-835 together coordinate Zn(2+).

It belongs to the SecA family. As to quaternary structure, monomer and homodimer. Part of the essential Sec protein translocation apparatus which comprises SecA, SecYEG and auxiliary proteins SecDF. Other proteins may also be involved. It depends on Zn(2+) as a cofactor.

The protein resides in the cell membrane. Its subcellular location is the cytoplasm. It carries out the reaction ATP + H2O + cellular proteinSide 1 = ADP + phosphate + cellular proteinSide 2.. Its function is as follows. Part of the Sec protein translocase complex. Interacts with the SecYEG preprotein conducting channel. Has a central role in coupling the hydrolysis of ATP to the transfer of proteins into and across the cell membrane, serving as an ATP-driven molecular motor driving the stepwise translocation of polypeptide chains across the membrane. This chain is Protein translocase subunit SecA, found in Clostridium perfringens (strain 13 / Type A).